A 155-amino-acid chain; its full sequence is Ribosome maturation factor RimP (155 aa).

Belongs to the RimP family.

The protein resides in the cytoplasm. Required for maturation of 30S ribosomal subunits. The chain is Ribosome maturation factor RimP from Staphylococcus haemolyticus (strain JCSC1435).